Here is a 692-residue protein sequence, read N- to C-terminus: ABC1 family protein C21C3.03, mitochondrial (692 aa).

Residues 1-91 (MISFSHWNSH…RKFTTRQKSE (91 aa)) constitute a mitochondrion transit peptide. A run of 2 helical transmembrane segments spans residues 96–116 (WRILRITFLVLPFTVGGLWIL) and 161–181 (LFIIFSPIIITLPFIALISFL).

This sequence belongs to the protein kinase superfamily. ADCK protein kinase family.

It is found in the mitochondrion membrane. This Schizosaccharomyces pombe (strain 972 / ATCC 24843) (Fission yeast) protein is ABC1 family protein C21C3.03, mitochondrial.